The primary structure comprises 66 residues: Antimicrobial peptide Eval967 (66 aa).

The signal sequence occupies residues 1-22; the sequence is MKFSALLPVFFLLLAVIDYCQA. Leucine 36 is modified (leucine amide). Residues 37–66 constitute a propeptide that is removed on maturation; that stretch reads GKRDVKTQKYVDIKRRDLDLDDMLSKLFED.

This sequence belongs to the non-disulfide-bridged peptide (NDBP) superfamily. Short antimicrobial peptide (group 4) family. As to expression, expressed by the venom gland.

The protein resides in the secreted. Its function is as follows. Probable antimicrobial peptide. Has no inhibitory activity against herpes simplex virus type 1 (HSV-1). The protein is Antimicrobial peptide Eval967 of Euscorpiops validus (Scorpion).